We begin with the raw amino-acid sequence, 75 residues long: uncharacterized protein (75 aa).

This is an uncharacterized protein from Acidianus filamentous virus 1 (isolate United States/Yellowstone) (AFV-1).